Here is a 327-residue protein sequence, read N- to C-terminus: GPI-linked NAD(P)(+)--arginine ADP-ribosyltransferase 1 (327 aa).

The N-terminal stretch at 1 to 22 (MWVPAVANLLLLSLGLLEAIQA) is a signal peptide. 2 disulfide bridges follow: cysteine 53–cysteine 277 and cysteine 174–cysteine 224. Asparagine 65 carries N-linked (GlcNAc...) asparagine glycosylation. Residues 73–273 (KVYADGWALA…IYLKALGKRS (201 aa)) enclose the TR mART core domain. NAD(+) is bound by residues tyrosine 121 and arginine 179. Active-site residues include arginine 179 and serine 202. Serine 233 contributes to the NAD(+) binding site. The active site involves glutamate 240. N-linked (GlcNAc...) asparagine glycosylation is present at asparagine 253. Residue serine 295 is the site of GPI-anchor amidated serine attachment. Positions 296 to 327 (ASAQERLSTAWSLLLLLAFLAVGPFPGSPGLF) are cleaved as a propeptide — removed in mature form.

Belongs to the Arg-specific ADP-ribosyltransferase family. As to expression, primarily in skeletal and cardiac muscle.

Its subcellular location is the sarcoplasmic reticulum membrane. It carries out the reaction L-arginyl-[protein] + NAD(+) = N(omega)-(ADP-D-ribosyl)-L-arginyl-[protein] + nicotinamide + H(+). In terms of biological role, has ADP-ribosyltransferase activity toward GLP1R. The polypeptide is GPI-linked NAD(P)(+)--arginine ADP-ribosyltransferase 1 (ART1) (Oryctolagus cuniculus (Rabbit)).